Here is a 365-residue protein sequence, read N- to C-terminus: Serpentine receptor class epsilon-38 (365 aa).

Helical transmembrane passes span 26–46 (GMYL…GVII), 65–85 (IMTA…LLII), 124–144 (ALVI…FGIL), 168–188 (IPVF…YFVL), 196–216 (LGTS…LAVW), 256–276 (LVIV…CLVI), and 285–305 (IFIH…CSTL).

The protein belongs to the nematode receptor-like protein sre family.

The protein resides in the membrane. This chain is Serpentine receptor class epsilon-38 (sre-38), found in Caenorhabditis elegans.